A 341-amino-acid polypeptide reads, in one-letter code: Putative NADPH-dependent methylglyoxal reductase GRP2 (341 aa).

2 residues coordinate NADP(+): K40 and Y171.

This sequence belongs to the NAD(P)-dependent epimerase/dehydratase family. Dihydroflavonol-4-reductase subfamily.

The protein resides in the cytoplasm. The enzyme catalyses (S)-lactaldehyde + NADP(+) = methylglyoxal + NADPH + H(+). In terms of biological role, catalyzes the irreversible reduction of the cytotoxic compound methylglyoxal (MG, 2-oxopropanal) to (S)-lactaldehyde. MG is synthesized via a bypath of glycolysis from dihydroxyacetone phosphate and is believed to play a role in cell cycle regulation and stress adaptation. The polypeptide is Putative NADPH-dependent methylglyoxal reductase GRP2 (GRP2) (Candida albicans (strain SC5314 / ATCC MYA-2876) (Yeast)).